Here is a 222-residue protein sequence, read N- to C-terminus: Glutathione-specific gamma-glutamylcyclotransferase 1 (222 aa).

The disordered stretch occupies residues methionine 1 to tryptophan 25. Isoleucine 35–serine 40 contacts substrate. Glutamate 115 functions as the Proton acceptor in the catalytic mechanism.

It belongs to the gamma-glutamylcyclotransferase family. ChaC subfamily. As to quaternary structure, interacts with NOTCH1 (via extracellular region).

Its subcellular location is the cytoplasm. It is found in the cytosol. It localises to the golgi apparatus. The protein resides in the trans-Golgi network. It catalyses the reaction glutathione = L-cysteinylglycine + 5-oxo-L-proline. Functionally, catalyzes the cleavage of glutathione into 5-oxo-L-proline and a Cys-Gly dipeptide. Acts specifically on glutathione, but not on other gamma-glutamyl peptides. Glutathione depletion is an important factor for apoptosis initiation and execution. Acts as a pro-apoptotic component of the unfolded protein response pathway by mediating the pro-apoptotic effects of the ATF4-ATF3-DDIT3/CHOP cascade. Negative regulator of Notch signaling pathway involved in embryonic neurogenesis: acts by inhibiting Notch cleavage by furin, maintaining Notch in an immature inactive form, thereby promoting neurogenesis in embryos. The chain is Glutathione-specific gamma-glutamylcyclotransferase 1 from Rattus norvegicus (Rat).